The following is a 400-amino-acid chain: Formate-dependent phosphoribosylglycinamide formyltransferase (400 aa).

N(1)-(5-phospho-beta-D-ribosyl)glycinamide-binding positions include 22-23 and Glu82; that span reads EL. ATP is bound by residues Arg115, Lys156, 161-166, 196-199, and Glu204; these read SSGKGQ and EGFI. Residues 120–309 form the ATP-grasp domain; it reads RLAAETLGLP…EFALHARAIL (190 aa). Residues Glu268 and Glu280 each coordinate Mg(2+). N(1)-(5-phospho-beta-D-ribosyl)glycinamide contacts are provided by residues Asp287, Lys361, and 368 to 369; that span reads RR.

The protein belongs to the PurK/PurT family. As to quaternary structure, homodimer.

The enzyme catalyses N(1)-(5-phospho-beta-D-ribosyl)glycinamide + formate + ATP = N(2)-formyl-N(1)-(5-phospho-beta-D-ribosyl)glycinamide + ADP + phosphate + H(+). It functions in the pathway purine metabolism; IMP biosynthesis via de novo pathway; N(2)-formyl-N(1)-(5-phospho-D-ribosyl)glycinamide from N(1)-(5-phospho-D-ribosyl)glycinamide (formate route): step 1/1. In terms of biological role, involved in the de novo purine biosynthesis. Catalyzes the transfer of formate to 5-phospho-ribosyl-glycinamide (GAR), producing 5-phospho-ribosyl-N-formylglycinamide (FGAR). Formate is provided by PurU via hydrolysis of 10-formyl-tetrahydrofolate. In Xanthomonas oryzae pv. oryzae (strain PXO99A), this protein is Formate-dependent phosphoribosylglycinamide formyltransferase.